A 358-amino-acid polypeptide reads, in one-letter code: Ion-translocating oxidoreductase complex subunit D (358 aa).

4 helical membrane passes run 19-39 (IMLW…YYFG), 41-61 (GVLL…FIAI), 79-99 (LTAL…VIII), and 125-145 (IGYV…MPPI). The residue at position 186 (Thr-186) is an FMN phosphoryl threonine. Helical transmembrane passes span 220-240 (FAQG…FLIL), 248-268 (IPVA…FTGF), 271-291 (LSAI…FIAT), 297-317 (SITP…VYLI), and 321-341 (GNYP…VPLI).

It belongs to the NqrB/RnfD family. As to quaternary structure, the complex is composed of six subunits: RnfA, RnfB, RnfC, RnfD, RnfE and RnfG. FMN serves as cofactor.

The protein localises to the cell inner membrane. In terms of biological role, part of a membrane-bound complex that couples electron transfer with translocation of ions across the membrane. The chain is Ion-translocating oxidoreductase complex subunit D from Haemophilus influenzae (strain PittEE).